Consider the following 244-residue polypeptide: tRNA (guanine-N(1)-)-methyltransferase (244 aa).

Residues Gly120 and 140–145 (IGDYIL) each bind S-adenosyl-L-methionine.

This sequence belongs to the RNA methyltransferase TrmD family. As to quaternary structure, homodimer.

The protein localises to the cytoplasm. It carries out the reaction guanosine(37) in tRNA + S-adenosyl-L-methionine = N(1)-methylguanosine(37) in tRNA + S-adenosyl-L-homocysteine + H(+). Specifically methylates guanosine-37 in various tRNAs. This chain is tRNA (guanine-N(1)-)-methyltransferase, found in Brucella abortus (strain S19).